Here is a 139-residue protein sequence, read N- to C-terminus: Holo-[acyl-carrier-protein] synthase (139 aa).

Mg(2+) is bound by residues D8 and E57.

This sequence belongs to the P-Pant transferase superfamily. AcpS family. Mg(2+) serves as cofactor.

The protein localises to the cytoplasm. It carries out the reaction apo-[ACP] + CoA = holo-[ACP] + adenosine 3',5'-bisphosphate + H(+). Transfers the 4'-phosphopantetheine moiety from coenzyme A to a Ser of acyl-carrier-protein. The polypeptide is Holo-[acyl-carrier-protein] synthase (Sinorhizobium medicae (strain WSM419) (Ensifer medicae)).